Reading from the N-terminus, the 510-residue chain is Histidine ammonia-lyase (510 aa).

The 5-imidazolinone (Ala-Gly) cross-link spans 145–147 (ASG). 2,3-didehydroalanine (Ser) is present on S146.

Belongs to the PAL/histidase family. Post-translationally, contains an active site 4-methylidene-imidazol-5-one (MIO), which is formed autocatalytically by cyclization and dehydration of residues Ala-Ser-Gly.

The protein localises to the cytoplasm. The enzyme catalyses L-histidine = trans-urocanate + NH4(+). It functions in the pathway amino-acid degradation; L-histidine degradation into L-glutamate; N-formimidoyl-L-glutamate from L-histidine: step 1/3. The chain is Histidine ammonia-lyase from Stigmatella aurantiaca.